Here is a 75-residue protein sequence, read N- to C-terminus: Peptide Ctri9610 (75 aa).

A signal peptide spans 1–22; that stretch reads MNSKYLFVFLILNVIFIDLCQG. A Lysine amide modification is found at Lys41. A propeptide spanning residues 42–75 is cleaved from the precursor; that stretch reads GTRRRELGSQYDYLQDFRKRELDLDDLLSKFPDY.

This sequence belongs to the non-disulfide-bridged peptide (NDBP) superfamily. Short antimicrobial peptide (group 4) family. Expressed by the venom gland.

It localises to the secreted. This chain is Peptide Ctri9610, found in Chaerilus tricostatus (Scorpion).